The chain runs to 401 residues: MIIKPKIRGFICTTTHPVGCEANVKEQIAYTKAQGPIKNAPKRVLVVGSSSGYGLSSRIAAAFGGGAATIGVFFEKPGTDKKPGTAGFYNAAAFDKLAHEAGLYAKSLNGDAFSNEAKQKAIELIKQDLGQIDLVVYSLASPVRKMPDTGELVRSALKPIGETYTSTAVDTNKDVIIEASVEPATEQEIADTVTVMGGQDWELWIQALEEAGVLAEGCKTVAYSYIGTELTWPIYWDGALGRAKMDLDRAATALNEKLAAKGGTANVAVLKSVVTQASSAIPVMPLYIAMVFKKMREQGVHEGCMEQIYRMFSQRLYKEDGSAPEVDDHNRLRLDDWELRDDIQQHCRDLWPQITTENLRELTDYDMYKEEFIKLFGFGIEGIDYDADVNPEVEFDVIDIE.

NAD(+)-binding positions include 48–53, 74–75, 111–112, and 139–140; these read GSSSGY, FE, DA, and LA. Position 225 (tyrosine 225) interacts with substrate. The active-site Proton donor is tyrosine 235. NAD(+)-binding positions include lysine 244 and 273–275; that span reads VVT.

The protein belongs to the TER reductase family. Monomer.

The enzyme catalyses a 2,3-saturated acyl-[ACP] + NAD(+) = a (2E)-enoyl-[ACP] + NADH + H(+). It carries out the reaction a 2,3-saturated acyl-CoA + NAD(+) = a (2E)-enoyl-CoA + NADH + H(+). It catalyses the reaction (2E)-butenoyl-[ACP] + NADH + H(+) = butanoyl-[ACP] + NAD(+). The catalysed reaction is butanoyl-CoA + NAD(+) = (2E)-butenoyl-CoA + NADH + H(+). It participates in lipid metabolism; fatty acid biosynthesis. Its activity is regulated as follows. Weakly inhibited by triclosan. In terms of biological role, involved in the final reduction of the elongation cycle of fatty acid synthesis (FAS II). Catalyzes the NADH-dependent reduction of a carbon-carbon double bond in an enoyl moiety that is covalently linked to an acyl carrier protein (ACP). It can use both crotonyl-CoA and crotonyl-ACP. The sequence is that of Enoyl-[acyl-carrier-protein] reductase [NADH] 1 from Vibrio cholerae serotype O1 (strain ATCC 39315 / El Tor Inaba N16961).